The sequence spans 141 residues: Hemoglobin subunit alpha (141 aa).

One can recognise a Globin domain in the interval 1-141 (VLSPADKTNV…VSTVLTSKYR (141 aa)). Position 3 is a phosphoserine (Ser-3). Lys-7 carries the post-translational modification N6-succinyllysine. Thr-8 is modified (phosphothreonine). The residue at position 11 (Lys-11) is an N6-succinyllysine. An N6-acetyllysine; alternate modification is found at Lys-16. Lys-16 carries the post-translational modification N6-succinyllysine; alternate. Position 24 is a phosphotyrosine (Tyr-24). Position 35 is a phosphoserine (Ser-35). An N6-succinyllysine modification is found at Lys-40. Ser-49 is modified (phosphoserine). His-58 serves as a coordination point for O2. Residue His-87 coordinates heme b. Residue Ser-102 is modified to Phosphoserine. Thr-108 carries the phosphothreonine modification. Ser-124 and Ser-131 each carry phosphoserine. Phosphothreonine is present on residues Thr-134 and Thr-137. A Phosphoserine modification is found at Ser-138.

This sequence belongs to the globin family. In terms of assembly, heterotetramer of two alpha chains and two beta chains. In terms of tissue distribution, red blood cells.

Involved in oxygen transport from the lung to the various peripheral tissues. Functionally, hemopressin acts as an antagonist peptide of the cannabinoid receptor CNR1. Hemopressin-binding efficiently blocks cannabinoid receptor CNR1 and subsequent signaling. In Loris tardigradus (Slender loris), this protein is Hemoglobin subunit alpha (HBA).